The following is a 792-amino-acid chain: Cullin-4 (792 aa).

Residues 1-10 (MSLPTKRSTF) show a composition bias toward polar residues. The tract at residues 1 to 43 (MSLPTKRSTFSAASASDDSSYSSPPMKKAKNDLHHSPQHPNTA) is disordered. The span at 11 to 23 (SAASASDDSSYSS) shows a compositional bias: low complexity. In terms of domain architecture, Cullin neddylation spans 724-784 (DRQYQIDAAI…REYLEREKSN (61 aa)). Residue Lys738 forms a Glycyl lysine isopeptide (Lys-Gly) (interchain with G-Cter in NEDD8) linkage.

It belongs to the cullin family. In terms of assembly, interacts with COP10, CSN3, CSN4, CSN5, CSN8, DDB1A, DDB1B, DDB2, DET1 and RBX1. Post-translationally, neddylated (rubylated). Deneddylated via its interaction with the COP9 signalosome (CSN) complex. As to expression, ubiquitous.

The protein resides in the nucleus. It functions in the pathway protein modification; protein ubiquitination. Its function is as follows. Component of the CUL4-RBX1-CDD (COP10-DDB1a-DET1) E3 ubiquitin-protein ligase complex which mediates the ubiquitination and subsequent proteasomal degradation of target proteins. Participates in the CDD complex to light-mediated control of development. May repress photomorphogenesis through enhancing COP1 E3 ubiquitin-protein ligase activity. Acts together with the CUL4-DDB1-COP1-SPA E3 ubiquitin-protein ligase complexes in the repression of photomorphogenesis and flowering time. Component ot the CUL4-RBX1-DDB1-PRL1 E3 ubiquitin-protein ligase complex which mediates ubiquitination and subsequent degradation of AKIN10. Component of the CUL4-RBX1-DDB1-DWA1/DWA2 E3 ubiquitin-protein ligase complex that acts as a negative regulator in abscisic acid (ABA) signaling and may target ABI5 for degradation. The sequence is that of Cullin-4 (CUL4) from Arabidopsis thaliana (Mouse-ear cress).